Here is a 1130-residue protein sequence, read N- to C-terminus: BTB/POZ domain-containing protein 7 (1130 aa).

Residues 1-10 (MGANASNYPH) show a composition bias toward polar residues. Residues 1-24 (MGANASNYPHSCSPRVGGNSQAQQ) are disordered. Glycine 2 carries N-myristoyl glycine lipidation. BTB domains follow at residues 142-211 (TDVD…GMED) and 247-341 (YDVV…DLSV). The BACK domain maps to 413–479 (YGSKWVHRQA…WGEHQLMKRI (67 aa)). Position 722 is a phosphoserine (serine 722). Disordered stretches follow at residues 898–1050 (SEAG…PAHV) and 1062–1130 (FGLT…KSAL). Basic and acidic residues-rich tracts occupy residues 923–935 (PTLEQKADGRENQ) and 996–1005 (KKQEDPRREY). Serine 1008 is subject to Phosphoserine. Positions 1063–1075 (GLTSNRPPSHSAC) are enriched in polar residues. 2 stretches are compositionally biased toward basic and acidic residues: residues 1080–1090 (LEERSSRRLTD) and 1101–1112 (RNADLERGDSIS).

As to expression, specifically expressed in embryonic epithelia.

The protein localises to the nucleus. In terms of biological role, acts as a mediator of epithelial dynamics and organ branching by promoting cleft progression. Induced following accumulation of fibronectin in forming clefts, leading to local expression of the cell-scattering SNAIL2 and suppression of E-cadherin levels, thereby altering cell morphology and reducing cell-cell adhesion. This stimulates cell separation at the base of forming clefts by local, dynamic intercellular gap formation and promotes cleft progression. The chain is BTB/POZ domain-containing protein 7 (Btbd7) from Mus musculus (Mouse).